The chain runs to 166 residues: ATP synthase subunit b (166 aa).

A helical membrane pass occupies residues 27-47; that stretch reads FFVVLLIFLIVLGVIAKWVVP. Positions 124-143 are disordered; it reads SADQQLSQQGSAAQSELQSS.

Belongs to the ATPase B chain family. In terms of assembly, F-type ATPases have 2 components, F(1) - the catalytic core - and F(0) - the membrane proton channel. F(1) has five subunits: alpha(3), beta(3), gamma(1), delta(1), epsilon(1). F(0) has three main subunits: a(1), b(2) and c(10-14). The alpha and beta chains form an alternating ring which encloses part of the gamma chain. F(1) is attached to F(0) by a central stalk formed by the gamma and epsilon chains, while a peripheral stalk is formed by the delta and b chains.

It localises to the cell membrane. F(1)F(0) ATP synthase produces ATP from ADP in the presence of a proton or sodium gradient. F-type ATPases consist of two structural domains, F(1) containing the extramembraneous catalytic core and F(0) containing the membrane proton channel, linked together by a central stalk and a peripheral stalk. During catalysis, ATP synthesis in the catalytic domain of F(1) is coupled via a rotary mechanism of the central stalk subunits to proton translocation. Its function is as follows. Component of the F(0) channel, it forms part of the peripheral stalk, linking F(1) to F(0). The chain is ATP synthase subunit b from Mycolicibacterium vanbaalenii (strain DSM 7251 / JCM 13017 / BCRC 16820 / KCTC 9966 / NRRL B-24157 / PYR-1) (Mycobacterium vanbaalenii).